The primary structure comprises 341 residues: 1-aminocyclopropane-1-carboxylate deaminase (341 aa).

Residue serine 1 is modified to N-acetylserine. The residue at position 51 (lysine 51) is an N6-(pyridoxal phosphate)lysine. Residue serine 78 is the Nucleophile of the active site.

The protein belongs to the ACC deaminase/D-cysteine desulfhydrase family. Homodimer. Requires pyridoxal 5'-phosphate as cofactor.

It catalyses the reaction 1-aminocyclopropane-1-carboxylate + H2O = 2-oxobutanoate + NH4(+). Functionally, catalyzes a cyclopropane ring-opening reaction, the irreversible conversion of 1-aminocyclopropane-1-carboxylate (ACC) to ammonia and alpha-ketobutyrate. This Cyberlindnera saturnus (Yeast) protein is 1-aminocyclopropane-1-carboxylate deaminase.